A 232-amino-acid chain; its full sequence is tRNA (guanine-N(1)-)-methyltransferase (232 aa).

Residues Gly114 and 134–139 each bind S-adenosyl-L-methionine; that span reads IGDYIL.

It belongs to the RNA methyltransferase TrmD family. Homodimer.

The protein localises to the cytoplasm. It carries out the reaction guanosine(37) in tRNA + S-adenosyl-L-methionine = N(1)-methylguanosine(37) in tRNA + S-adenosyl-L-homocysteine + H(+). Specifically methylates guanosine-37 in various tRNAs. This Wolbachia pipientis subsp. Culex pipiens (strain wPip) protein is tRNA (guanine-N(1)-)-methyltransferase.